The chain runs to 2798 residues: Kinesin-like protein KIN-12F (2798 aa).

The interval 1-165 (MVRDLAAVRR…RPPMSSGQRG (165 aa)) is disordered. 2 stretches are compositionally biased toward low complexity: residues 8–22 (VRRTPARASTSSSAS) and 31–58 (PVDASDAAVVEPEAAAARPPLLAIQPPQ). The Kinesin motor domain maps to 210–547 (NVQVVIRVRP…LKFAQRARLI (338 aa)). ATP is bound at residue 291 to 298 (GQTGSGKT). Over residues 600-615 (DVDDGTESMNMDEEND) the composition is skewed to acidic residues. A disordered region spans residues 600–621 (DVDDGTESMNMDEENDNDAHDR). Coiled-coil stretches lie at residues 792 to 835 (ELKR…HSSN), 890 to 987 (LAEE…HRRQ), 1014 to 1108 (LKRM…VMKE), 1281 to 1322 (QRAM…LKNE), and 2130 to 2333 (ELVD…VRQQ). The interval 2338-2359 (PSSGQATSSLEGGMGDFTDSSR) is disordered. Coiled-coil stretches lie at residues 2361–2427 (SREI…VKSD) and 2545–2758 (ESKE…LKLK). The tract at residues 2772-2798 (RSESSSLSSGRSRSPSVCRSPSISSFR) is disordered. Low complexity predominate over residues 2774 to 2798 (ESSSLSSGRSRSPSVCRSPSISSFR).

Belongs to the TRAFAC class myosin-kinesin ATPase superfamily. Kinesin family. KIN-12 subfamily.

The protein is Kinesin-like protein KIN-12F of Oryza sativa subsp. japonica (Rice).